Here is a 147-residue protein sequence, read N- to C-terminus: Nucleoside diphosphate kinase (147 aa).

Positions 9, 57, 85, 91, 102, and 112 each coordinate ATP. His115 acts as the Pros-phosphohistidine intermediate in catalysis.

The protein belongs to the NDK family. Homotetramer. It depends on Mg(2+) as a cofactor.

It is found in the cytoplasm. The catalysed reaction is a 2'-deoxyribonucleoside 5'-diphosphate + ATP = a 2'-deoxyribonucleoside 5'-triphosphate + ADP. It carries out the reaction a ribonucleoside 5'-diphosphate + ATP = a ribonucleoside 5'-triphosphate + ADP. Functionally, major role in the synthesis of nucleoside triphosphates other than ATP. The ATP gamma phosphate is transferred to the NDP beta phosphate via a ping-pong mechanism, using a phosphorylated active-site intermediate. The protein is Nucleoside diphosphate kinase of Brevibacillus brevis (strain 47 / JCM 6285 / NBRC 100599).